The following is a 555-amino-acid chain: Glucose-6-phosphate isomerase (555 aa).

Glu360 acts as the Proton donor in catalysis. Residues His391 and Lys519 contribute to the active site.

Belongs to the GPI family.

The protein localises to the cytoplasm. The catalysed reaction is alpha-D-glucose 6-phosphate = beta-D-fructose 6-phosphate. It participates in carbohydrate biosynthesis; gluconeogenesis. The protein operates within carbohydrate degradation; glycolysis; D-glyceraldehyde 3-phosphate and glycerone phosphate from D-glucose: step 2/4. In terms of biological role, catalyzes the reversible isomerization of glucose-6-phosphate to fructose-6-phosphate. The chain is Glucose-6-phosphate isomerase from Acinetobacter baumannii (strain AB307-0294).